Here is a 583-residue protein sequence, read N- to C-terminus: Phytoene desaturase (583 aa).

A signal peptide spans 1–20; it reads MAPPKHVIIIGAGAGGTATA. The helical transmembrane segment at 531–551 threads the bilayer; the sequence is IIWFLLIALFAATLVLFIAFP.

It belongs to the carotenoid/retinoid oxidoreductase family. Requires NAD(+) as cofactor.

The protein localises to the membrane. It carries out the reaction 15-cis-phytoene + 5 A = all-trans-3,4-didehydrolycopene + 5 AH2. Its pathway is carotenoid biosynthesis; lycopene biosynthesis. In terms of biological role, phytoene desaturase involved in the carotenoid biosynthesis pathway. Converts phytoene into 3,4-didehydrolycopene via the intermediary of phytofluene, zeta-carotene, neurosporene and lycopene, by introducing up to five double bonds into phytoene. The sequence is that of Phytoene desaturase (carB) from Phycomyces blakesleeanus (strain ATCC 8743b / DSM 1359 / FGSC 10004 / NBRC 33097 / NRRL 1555).